We begin with the raw amino-acid sequence, 201 residues long: Small ribosomal subunit protein uS2 (201 aa).

It belongs to the universal ribosomal protein uS2 family. In terms of assembly, part of the 50S ribosomal subunit.

The chain is Small ribosomal subunit protein uS2 from Thermococcus kodakarensis (strain ATCC BAA-918 / JCM 12380 / KOD1) (Pyrococcus kodakaraensis (strain KOD1)).